Here is a 953-residue protein sequence, read N- to C-terminus: Isoleucine--tRNA ligase (953 aa).

A 'HIGH' region motif is present at residues Pro57–His67. Glu582 lines the L-isoleucyl-5'-AMP pocket. The 'KMSKS' region motif lies at Lys623 to Ser627. ATP is bound at residue Lys626. Cys916, Cys919, Cys936, and Cys939 together coordinate Zn(2+).

The protein belongs to the class-I aminoacyl-tRNA synthetase family. IleS type 1 subfamily. In terms of assembly, monomer. Zn(2+) serves as cofactor.

Its subcellular location is the cytoplasm. It catalyses the reaction tRNA(Ile) + L-isoleucine + ATP = L-isoleucyl-tRNA(Ile) + AMP + diphosphate. Its function is as follows. Catalyzes the attachment of isoleucine to tRNA(Ile). As IleRS can inadvertently accommodate and process structurally similar amino acids such as valine, to avoid such errors it has two additional distinct tRNA(Ile)-dependent editing activities. One activity is designated as 'pretransfer' editing and involves the hydrolysis of activated Val-AMP. The other activity is designated 'posttransfer' editing and involves deacylation of mischarged Val-tRNA(Ile). This chain is Isoleucine--tRNA ligase, found in Bordetella bronchiseptica (strain ATCC BAA-588 / NCTC 13252 / RB50) (Alcaligenes bronchisepticus).